The following is a 103-amino-acid chain: Large ribosomal subunit protein bL21 (103 aa).

Belongs to the bacterial ribosomal protein bL21 family. Part of the 50S ribosomal subunit. Contacts protein L20.

This protein binds to 23S rRNA in the presence of protein L20. The sequence is that of Large ribosomal subunit protein bL21 from Mycobacterium sp. (strain JLS).